The primary structure comprises 335 residues: Mycobacterial beta-ketoacyl-[acyl-carrier-protein] synthase III (335 aa).

Catalysis depends on residues Cys122 and His258. The interval 259 to 263 is ACP-binding; that stretch reads QANSR. Residue Asn289 is part of the active site.

This sequence belongs to the thiolase-like superfamily. FabH family. As to quaternary structure, homodimer.

It is found in the cytoplasm. The enzyme catalyses malonyl-[ACP] + dodecanoyl-CoA + H(+) = 3-oxotetradecanoyl-[ACP] + CO2 + CoA. The protein operates within lipid metabolism; fatty acid biosynthesis. It participates in lipid metabolism; mycolic acid biosynthesis. In terms of biological role, catalyzes the condensation reaction of fatty acid synthesis by the addition to an acyl acceptor of two carbons from malonyl-ACP. Catalyzes the first condensation reaction which initiates fatty acid synthesis and may therefore play a role in governing the total rate of fatty acid production. Possesses both acetoacetyl-ACP synthase and acetyl transacylase activities. Its substrate specificity determines the biosynthesis of branched-chain and/or straight-chain of fatty acids. In Mycobacterium marinum (strain ATCC BAA-535 / M), this protein is Mycobacterial beta-ketoacyl-[acyl-carrier-protein] synthase III.